The following is a 443-amino-acid chain: Probable lysophospholipase BODYGUARD 5 (443 aa).

The first 52 residues, 1 to 52 (MITSSFSEKCTSVINGAPSWAVFFLFDLLDYFLCIVFRFLDEVMEEKSESCH), serve as a signal peptide directing secretion. Cysteine 53 is lipidated: N-palmitoyl cysteine. An AB hydrolase-1 domain is found at 163–268 (VIFVHGFLAS…VKSVALVAPP (106 aa)). Histidine 167 is an active-site residue. Serine 242 functions as the Nucleophile in the catalytic mechanism. Active-site charge relay system residues include aspartate 387 and histidine 415.

It localises to the cell membrane. The protein localises to the secreted. The protein resides in the cell wall. Its function is as follows. Involved in cuticle development and morphogenesis. The sequence is that of Probable lysophospholipase BODYGUARD 5 from Arabidopsis thaliana (Mouse-ear cress).